The sequence spans 664 residues: MVEAKIKALRDELERHNYNYYVLSAPTISDFEFDKMMKELQELEAAHPEFADPDSPTRRVGSDLSKEFEQVVHKYPMLSLGNTYSEDEIRDFYDRTVRSLNEPFEIVAELKYDGTSISLTYEKGRLTRAVTRGDGTRGDDVTANIKTIRSVPLRLRGSDFPEEFEIRGEVLLPWAEFDRLNKEREEQEEPLFANPRNAASGTLKQQNPAIVASRKLDAYFYYLLGENLPAEGHYENLQAARAWGFKIPDVIRKCQSLQDIFDYIAYWDVERKNLPVATDGIVLKVNSLRQQRNLGFTSKSPRWAIAYKFQAERAETRLNSVSFQVGRTGTVTPVANLEPVLLAGTVVKRASLHNADIIEGLDLHIGDQVYVEKGGEIIPKIVGVNVEARSMLMGDKVRFIRVCPECGTPLVRPEGEAAHYCPNESGCPPQIKGRIEHFVTRKAMNINIGPETVEDLYNAGYVKDSADLYTLTVADLLRLERWAEKSAQNLMSSLEESKQVPFERVLFGLGIRFVGETVAKRLVSAFHSIEALEQASLEDLVAVDEIGERIAQSVLSYFSDEKNRTLVNRLKEQGLRMAVSEEQLANRSEKLKGLTIVISGTFSKHSRDEYKAMIEQHGGKNSGSVSGKTDYILAGENMGPAKLEKAAKLGVKIINEDAFLNMLE.

NAD(+) is bound by residues 30–34 (DFEFD), 79–80 (SL), and Glu-109. Lys-111 (N6-AMP-lysine intermediate) is an active-site residue. The NAD(+) site is built by Arg-132, Glu-169, Lys-284, and Lys-308. Zn(2+)-binding residues include Cys-403, Cys-406, Cys-421, and Cys-427. Positions 586–664 (NRSEKLKGLT…NEDAFLNMLE (79 aa)) constitute a BRCT domain.

It belongs to the NAD-dependent DNA ligase family. LigA subfamily. Mg(2+) is required as a cofactor. The cofactor is Mn(2+).

The catalysed reaction is NAD(+) + (deoxyribonucleotide)n-3'-hydroxyl + 5'-phospho-(deoxyribonucleotide)m = (deoxyribonucleotide)n+m + AMP + beta-nicotinamide D-nucleotide.. In terms of biological role, DNA ligase that catalyzes the formation of phosphodiester linkages between 5'-phosphoryl and 3'-hydroxyl groups in double-stranded DNA using NAD as a coenzyme and as the energy source for the reaction. It is essential for DNA replication and repair of damaged DNA. This Parabacteroides distasonis (strain ATCC 8503 / DSM 20701 / CIP 104284 / JCM 5825 / NCTC 11152) protein is DNA ligase.